Here is a 406-residue protein sequence, read N- to C-terminus: Tyrosine--tRNA ligase (406 aa).

Residue Tyr35 participates in L-tyrosine binding. Residues 40 to 49 (PTADSLHVGH) carry the 'HIGH' region motif. 2 residues coordinate L-tyrosine: Tyr168 and Gln172. A 'KMSKS' region motif is present at residues 228-232 (KMGKT). Residue Lys231 participates in ATP binding. The region spanning 340-405 (STVLDVIAKV…GKKNYNKIEI (66 aa)) is the S4 RNA-binding domain.

The protein belongs to the class-I aminoacyl-tRNA synthetase family. TyrS type 1 subfamily. In terms of assembly, homodimer.

The protein resides in the cytoplasm. The enzyme catalyses tRNA(Tyr) + L-tyrosine + ATP = L-tyrosyl-tRNA(Tyr) + AMP + diphosphate + H(+). In terms of biological role, catalyzes the attachment of tyrosine to tRNA(Tyr) in a two-step reaction: tyrosine is first activated by ATP to form Tyr-AMP and then transferred to the acceptor end of tRNA(Tyr). In Clostridium botulinum (strain Eklund 17B / Type B), this protein is Tyrosine--tRNA ligase.